Consider the following 1024-residue polypeptide: Beta-galactosidase (1024 aa).

Substrate contacts are provided by Asn103 and Asp202. Asp202 is a Na(+) binding site. Residues Glu417, His419, and Glu462 each coordinate Mg(2+). Substrate contacts are provided by residues Glu462 and 538–541 (EYAH). Glu462 serves as the catalytic Proton donor. Residue Glu538 is the Nucleophile of the active site. Asn598 provides a ligand contact to Mg(2+). The Na(+) site is built by Phe602 and Asn605. 2 residues coordinate substrate: Asn605 and Trp1000.

Belongs to the glycosyl hydrolase 2 family. In terms of assembly, homotetramer. Mg(2+) is required as a cofactor. Requires Na(+) as cofactor.

The catalysed reaction is Hydrolysis of terminal non-reducing beta-D-galactose residues in beta-D-galactosides.. This Shigella sonnei (strain Ss046) protein is Beta-galactosidase.